The sequence spans 311 residues: tRNA-cytidine(32) 2-sulfurtransferase (311 aa).

The PP-loop motif signature appears at serine 47 to serine 52. [4Fe-4S] cluster contacts are provided by cysteine 122, cysteine 125, and cysteine 213.

It belongs to the TtcA family. Homodimer. It depends on Mg(2+) as a cofactor. The cofactor is [4Fe-4S] cluster.

The protein localises to the cytoplasm. It catalyses the reaction cytidine(32) in tRNA + S-sulfanyl-L-cysteinyl-[cysteine desulfurase] + AH2 + ATP = 2-thiocytidine(32) in tRNA + L-cysteinyl-[cysteine desulfurase] + A + AMP + diphosphate + H(+). It functions in the pathway tRNA modification. Its function is as follows. Catalyzes the ATP-dependent 2-thiolation of cytidine in position 32 of tRNA, to form 2-thiocytidine (s(2)C32). The sulfur atoms are provided by the cysteine/cysteine desulfurase (IscS) system. In Enterobacter sp. (strain 638), this protein is tRNA-cytidine(32) 2-sulfurtransferase.